Reading from the N-terminus, the 55-residue chain is uncharacterized protein (55 aa).

This is an uncharacterized protein from Mycobacterium tuberculosis (strain ATCC 25618 / H37Rv).